Here is a 783-residue protein sequence, read N- to C-terminus: Cyclin-dependent kinase 11A (783 aa).

Positions 18 to 58 are enriched in basic and acidic residues; it reads QEKKRRKEQEEKAEIKRLKNSDDRDSKRDSLEEGELRDHCM. Residues 18 to 396 form a disordered region; the sequence is QEKKRRKEQE…SALTEGDYVP (379 aa). A phosphoserine mark is found at Ser-47 and Ser-72. The segment covering 95 to 125 has biased composition (basic residues); sequence EKVHHRKDEKRKEKWKHARVKEREHERRKRH. Composition is skewed to basic and acidic residues over residues 126-215, 226-241, and 252-264; these read REEQ…DKVK, PPRE…KPGE, and QLKE…RDLL. Ser-271 is modified (phosphoserine). Low complexity predominate over residues 279–290; it reads SAESSSAESGSG. Acidic residues-rich tracts occupy residues 291 to 352 and 371 to 380; these read SEEE…EERE and ESEEAEEEVG. Positions 427 to 647 constitute a Protein kinase domain; it reads QCLNRIEEGT…VFKELGTPSE (221 aa). ATP-binding positions include 432–440 and Lys-455; that span reads IEEGTYGVV. Ser-470 carries the post-translational modification Phosphoserine; by CDK7. Thr-476 is modified (phosphothreonine; by CDK7). The active-site Proton acceptor is the Asp-550. A Phosphoserine modification is found at Ser-577. Tyr-582 carries the post-translational modification Phosphotyrosine. Phosphothreonine occurs at positions 583 and 739. The segment at 721 to 783 is disordered; the sequence is SMFPTWPAKS…AAGPGFSLKF (63 aa). A Phosphoserine modification is found at Ser-740.

The protein belongs to the protein kinase superfamily. CMGC Ser/Thr protein kinase family. CDC2/CDKX subfamily. In terms of assembly, the cleaved p110 isoform, p110C, binds to the serine/threonine kinase PAK1. The p58 isoform but not the p110 isoform or p110C interacts with CCND3. The p110 isoforms are found in large molecular weight complexes containing CCNL1 and SFRS7. Requires Mg(2+) as cofactor. Post-translationally, during apoptosis, induced by Fas or tumor necrosis factor, specific CKD11 p110 isoforms are cleaved by caspases to produce a protein (p110C) that contains the C-terminal kinase domain of the CDK11 proteins. As to expression, expressed ubiquitously. Some evidence of isoform-specific tissue distribution.

It localises to the cytoplasm. The protein resides in the nucleus. It carries out the reaction L-seryl-[protein] + ATP = O-phospho-L-seryl-[protein] + ADP + H(+). It catalyses the reaction L-threonyl-[protein] + ATP = O-phospho-L-threonyl-[protein] + ADP + H(+). With respect to regulation, phosphorylation at Thr-436 or Tyr-437 inactivates the enzyme, while phosphorylation at Thr-583 activates it. Its function is as follows. Appears to play multiple roles in cell cycle progression, cytokinesis and apoptosis. The p110 isoforms have been suggested to be involved in pre-mRNA splicing, potentially by phosphorylating the splicing protein SFRS7. The p58 isoform may act as a negative regulator of normal cell cycle progression. In Homo sapiens (Human), this protein is Cyclin-dependent kinase 11A (CDK11A).